Reading from the N-terminus, the 1086-residue chain is ATP-dependent helicase/deoxyribonuclease subunit B (1086 aa).

This sequence belongs to the helicase family. AddB/RexB type 2 subfamily. As to quaternary structure, heterodimer of AddA and RexB. It depends on Mg(2+) as a cofactor.

Its function is as follows. The heterodimer acts as both an ATP-dependent DNA helicase and an ATP-dependent, dual-direction single-stranded exonuclease. Recognizes the chi site generating a DNA molecule suitable for the initiation of homologous recombination. This subunit has 5' -&gt; 3' nuclease activity but not helicase activity. The protein is ATP-dependent helicase/deoxyribonuclease subunit B of Streptococcus uberis (strain ATCC BAA-854 / 0140J).